A 78-amino-acid chain; its full sequence is MALIRKTFYFLFAVFFILVQLPSGCQAGLDFSQPFPSGEFAVFESCKFSRGKCRKECLENEKPDGNCRLNFLCCRQSI.

Residues 1–27 form the signal peptide; it reads MALIRKTFYFLFAVFFILVQLPSGCQA. 3 disulfides stabilise this stretch: C46-C74, C53-C67, and C57-C73.

The protein belongs to the beta-defensin family.

The protein resides in the secreted. Has antimicrobial activity. This is Beta-defensin 105A (DEFB105A) from Hylobates lar (Lar gibbon).